A 779-amino-acid polypeptide reads, in one-letter code: MEQGRPRSSLSLTSSASTVSSLSSLSAKKPTRVVHKVHAFGKRNNALRRDPNLPVHIRGWLHKQDSSGLRLWKRRWFVLSGHCLFYYKDSREESVLGSVLLPSYSVRPDGPGAPRGRRFTFTAEHPGMRTYVLAADTLEDLRGWLRALGKASRAEGEDCGLPRSPARPRPGEGPGGPGGPPEVNRREEGRTSESPEVAPLSRGPGRHEMHAPGSSADLQPDTWSRRTRSPEPFSPLSRPPSPLSLPRPRSAPVRRPPLSAGDISFPARPHTPLSRIDVRPPLDWGPQRQTLSRPPIPRRGPFSEAGGGRPPRSPQLRTPEHRTQSTQVSSGSSTYLQLPPRPPGTQASMILLPGPPVDSTLHQSLETDTLLTKLCGQDRLLRQLQEDLDKRQEEKEQLEAALELTRQQLGQATREAAASGKAWGRQRLLQDRLVNVRAALCHLTQERERVWDTYSGLEQDLGTLRETLEYLLHLGSPQDRASAQQQLWMVEDTLAGLGGPQKQPPHTEPKSPSPAPQREESSERESLSESLELSSPQSPEVDWGQPPGGDRALSSSQSGVGSPRVSRASSPECRQQSSPLLRTKAPLARPRMSAQEQLERMRRNQACGLSLPRPTSPRLLTLGRTLSPVPRQPDMEQRPIVGAAKWLRSSGSWSSPRHSTTYSPVSGGHRERVLSLSQALATEASQWHRLMTASPERNLDTRGDCLQPSPQPPSEELPQVTSSPTSHKANSATTGFSCQGSGRGLAPWEPRWDPGKAPPALAQEEGAWPLRVTLLQSSF.

Residues 54-153 (PVHIRGWLHK…WLRALGKASR (100 aa)) enclose the PH domain. 3 disordered regions span residues 152–355 (SRAE…LPGP), 495–669 (AGLG…SGGH), and 694–766 (SPER…QEEG). A Phosphoserine modification is found at Ser164. Basic and acidic residues predominate over residues 183 to 193 (VNRREEGRTSE). 2 stretches are compositionally biased toward low complexity: residues 246-259 (PRPRSAPVRRPPLS) and 324-334 (QSTQVSSGSST). The segment covering 517 to 527 (QREESSERESL) has biased composition (basic and acidic residues). The segment covering 528-540 (SESLELSSPQSPE) has biased composition (low complexity). Position 562 is a phosphoserine (Ser562). The segment covering 567 to 580 (RASSPECRQQSSPL) has biased composition (polar residues). Composition is skewed to low complexity over residues 608–627 (GLSLPRPTSPRLLTLGRTLS) and 649–659 (SSGSWSSPRHS). Residues 720–740 (VTSSPTSHKANSATTGFSCQG) show a composition bias toward polar residues.

The protein resides in the cytoplasm. Its subcellular location is the membrane. In terms of biological role, binds specifically to phosphatidylinositol 3-phosphate (PtdIns3P), but not to other phosphoinositides. The protein is Pleckstrin homology domain-containing family A member 4 (Plekha4) of Rattus norvegicus (Rat).